Consider the following 208-residue polypeptide: Ribosomal RNA large subunit methyltransferase E (208 aa).

Positions 62, 64, 82, 98, and 123 each coordinate S-adenosyl-L-methionine. The active-site Proton acceptor is K163.

This sequence belongs to the class I-like SAM-binding methyltransferase superfamily. RNA methyltransferase RlmE family.

It localises to the cytoplasm. It catalyses the reaction uridine(2552) in 23S rRNA + S-adenosyl-L-methionine = 2'-O-methyluridine(2552) in 23S rRNA + S-adenosyl-L-homocysteine + H(+). Specifically methylates the uridine in position 2552 of 23S rRNA at the 2'-O position of the ribose in the fully assembled 50S ribosomal subunit. The polypeptide is Ribosomal RNA large subunit methyltransferase E (Edwardsiella ictaluri (strain 93-146)).